The sequence spans 1131 residues: Phytochrome B1 (1131 aa).

Positions 1-11 (MASGSRTKHSY) are enriched in basic residues. A disordered region spans residues 1-26 (MASGSRTKHSYHNSSQGQAQSSGTSN). The span at 14-25 (SSQGQAQSSGTS) shows a compositional bias: low complexity. A GAF domain is found at 229–408 (DIKLLCDTVV…AFGLQLNMEL (180 aa)). Residue C334 coordinates phytochromobilin. 2 PAS domains span residues 622–693 (VARE…LRGV) and 756–808 (DYKA…GEIF). The Histidine kinase domain occupies 904–1124 (YICQEVKSPL…MIILDLPMTR (221 aa)).

This sequence belongs to the phytochrome family. Homodimer. Post-translationally, contains one covalently linked phytochromobilin chromophore.

Regulatory photoreceptor which exists in two forms that are reversibly interconvertible by light: the Pr form that absorbs maximally in the red region of the spectrum and the Pfr form that absorbs maximally in the far-red region. Photoconversion of Pr to Pfr induces an array of morphogenic responses, whereas reconversion of Pfr to Pr cancels the induction of those responses. Pfr controls the expression of a number of nuclear genes including those encoding the small subunit of ribulose-bisphosphate carboxylase, chlorophyll A/B binding protein, protochlorophyllide reductase, rRNA, etc. It also controls the expression of its own gene(s) in a negative feedback fashion. The protein is Phytochrome B1 of Solanum lycopersicum (Tomato).